Here is a 287-residue protein sequence, read N- to C-terminus: Elongation factor Ts (287 aa).

Residues 79-82 (TDFV) are involved in Mg(2+) ion dislocation from EF-Tu.

The protein belongs to the EF-Ts family.

It is found in the cytoplasm. In terms of biological role, associates with the EF-Tu.GDP complex and induces the exchange of GDP to GTP. It remains bound to the aminoacyl-tRNA.EF-Tu.GTP complex up to the GTP hydrolysis stage on the ribosome. This Anaplasma phagocytophilum (strain HZ) protein is Elongation factor Ts.